The chain runs to 486 residues: Achaete-scute complex protein T8 (486 aa).

2 disordered regions span residues 1 to 26 and 75 to 158; these read MAAL…GIKT and AAST…LPLP. The segment covering 75-86 has biased composition (polar residues); sequence AASTTNTTPISS. One can recognise a bHLH domain in the interval 159–223; sequence QAVARRNARE…RMAVEYIRSL (65 aa).

Efficient DNA binding requires dimerization with another bHLH protein. In terms of tissue distribution, l(1)SC, SC and AC strongly label the presumptive stomatogastric nervous system, while ASE is more prominent in the presumptive procephalic lobe.

Involved in the determination of the neuronal precursors of optic lobes in the central nervous system. The protein is Achaete-scute complex protein T8 (ase) of Drosophila melanogaster (Fruit fly).